The sequence spans 101 residues: Trp operon repressor homolog (101 aa).

The DNA-binding element occupies 59-82 (QREIQQNLSTSAATITRGSNMLKM).

This sequence belongs to the TrpR family. Homodimer.

It is found in the cytoplasm. Its function is as follows. This protein is an aporepressor. When complexed with L-tryptophan it binds the operator region of the trp operon and prevents the initiation of transcription. This is Trp operon repressor homolog from Actinobacillus succinogenes (strain ATCC 55618 / DSM 22257 / CCUG 43843 / 130Z).